We begin with the raw amino-acid sequence, 305 residues long: UDP-3-O-acyl-N-acetylglucosamine deacetylase (305 aa).

3 residues coordinate Zn(2+): histidine 79, histidine 238, and aspartate 242. Catalysis depends on histidine 265, which acts as the Proton donor.

It belongs to the LpxC family. Zn(2+) is required as a cofactor.

It catalyses the reaction a UDP-3-O-[(3R)-3-hydroxyacyl]-N-acetyl-alpha-D-glucosamine + H2O = a UDP-3-O-[(3R)-3-hydroxyacyl]-alpha-D-glucosamine + acetate. The protein operates within glycolipid biosynthesis; lipid IV(A) biosynthesis; lipid IV(A) from (3R)-3-hydroxytetradecanoyl-[acyl-carrier-protein] and UDP-N-acetyl-alpha-D-glucosamine: step 2/6. Its function is as follows. Catalyzes the hydrolysis of UDP-3-O-myristoyl-N-acetylglucosamine to form UDP-3-O-myristoylglucosamine and acetate, the committed step in lipid A biosynthesis. The protein is UDP-3-O-acyl-N-acetylglucosamine deacetylase of Edwardsiella ictaluri (strain 93-146).